We begin with the raw amino-acid sequence, 343 residues long: Heme A synthase (343 aa).

Helical transmembrane passes span 13–33 (VAIW…VGGA), 96–116 (HRLL…VFLI), 130–150 (AMLG…SSGL), 161–181 (LMTH…TALD), 197–217 (GWAL…ALVA), 258–278 (FNHR…VVLA), 294–314 (AVAA…MAAV), and 318–338 (LGVL…AFAW). Heme is bound at residue H260. H322 contacts heme.

This sequence belongs to the COX15/CtaA family. Type 2 subfamily. In terms of assembly, interacts with CtaB. Requires heme b as cofactor.

It is found in the cell membrane. It catalyses the reaction Fe(II)-heme o + 2 A + H2O = Fe(II)-heme a + 2 AH2. It functions in the pathway porphyrin-containing compound metabolism; heme A biosynthesis; heme A from heme O: step 1/1. In terms of biological role, catalyzes the conversion of heme O to heme A by two successive hydroxylations of the methyl group at C8. The first hydroxylation forms heme I, the second hydroxylation results in an unstable dihydroxymethyl group, which spontaneously dehydrates, resulting in the formyl group of heme A. In Caulobacter vibrioides (strain ATCC 19089 / CIP 103742 / CB 15) (Caulobacter crescentus), this protein is Heme A synthase.